A 688-amino-acid polypeptide reads, in one-letter code: Methionine--tRNA ligase (688 aa).

The short motif at 15 to 25 (PYANGPIHLGH) is the 'HIGH' region element. Zn(2+) is bound by residues Cys146, Cys149, Cys159, and Cys162. The 'KMSKS' region motif lies at 332-336 (KMSKS). Position 335 (Lys335) interacts with ATP. Positions 552-576 (AEAPKKADSKKATDTPVDTRPPLES) are disordered. Over residues 554–564 (APKKADSKKAT) the composition is skewed to basic and acidic residues. In terms of domain architecture, tRNA-binding spans 587-688 (DFAKIDLRIA…EGAQPGMRVK (102 aa)).

Belongs to the class-I aminoacyl-tRNA synthetase family. MetG type 1 subfamily. Homodimer. It depends on Zn(2+) as a cofactor.

The protein localises to the cytoplasm. The enzyme catalyses tRNA(Met) + L-methionine + ATP = L-methionyl-tRNA(Met) + AMP + diphosphate. Is required not only for elongation of protein synthesis but also for the initiation of all mRNA translation through initiator tRNA(fMet) aminoacylation. This chain is Methionine--tRNA ligase, found in Shewanella woodyi (strain ATCC 51908 / MS32).